Here is a 404-residue protein sequence, read N- to C-terminus: Probable tRNA sulfurtransferase (404 aa).

One can recognise a THUMP domain in the interval 60–165; the sequence is QPIVEALKLV…DEAAYISYEE (106 aa). ATP is bound by residues 183-184, 208-209, arginine 265, glycine 287, and glutamine 296; these read ML and HF.

Belongs to the ThiI family.

Its subcellular location is the cytoplasm. The catalysed reaction is [ThiI sulfur-carrier protein]-S-sulfanyl-L-cysteine + a uridine in tRNA + 2 reduced [2Fe-2S]-[ferredoxin] + ATP + H(+) = [ThiI sulfur-carrier protein]-L-cysteine + a 4-thiouridine in tRNA + 2 oxidized [2Fe-2S]-[ferredoxin] + AMP + diphosphate. The enzyme catalyses [ThiS sulfur-carrier protein]-C-terminal Gly-Gly-AMP + S-sulfanyl-L-cysteinyl-[cysteine desulfurase] + AH2 = [ThiS sulfur-carrier protein]-C-terminal-Gly-aminoethanethioate + L-cysteinyl-[cysteine desulfurase] + A + AMP + 2 H(+). It participates in cofactor biosynthesis; thiamine diphosphate biosynthesis. Functionally, catalyzes the ATP-dependent transfer of a sulfur to tRNA to produce 4-thiouridine in position 8 of tRNAs, which functions as a near-UV photosensor. Also catalyzes the transfer of sulfur to the sulfur carrier protein ThiS, forming ThiS-thiocarboxylate. This is a step in the synthesis of thiazole, in the thiamine biosynthesis pathway. The sulfur is donated as persulfide by IscS. The chain is Probable tRNA sulfurtransferase from Streptococcus pyogenes serotype M49 (strain NZ131).